The sequence spans 520 residues: J protein JJJ2 (520 aa).

Residues 7–71 form the J domain; the sequence is TYYSVLGLPT…SSKQEYDAIL (65 aa). Disordered regions lie at residues 82–257 and 389–409; these read LGYK…DLQN and FESS…RGRP. A compositionally biased stretch (low complexity) spans 91–100; sequence QNQSNNLNQQ. The segment covering 152 to 182 has biased composition (polar residues); it reads TSKNSKEQQGSQETTNTSENLQRNAKGNKNN. Residues 397–409 show a composition bias toward basic and acidic residues; that stretch reads ENHRSDFNLRGRP.

It localises to the cytoplasm. Its subcellular location is the nucleus. The polypeptide is J protein JJJ2 (JJJ2) (Vanderwaltozyma polyspora (strain ATCC 22028 / DSM 70294 / BCRC 21397 / CBS 2163 / NBRC 10782 / NRRL Y-8283 / UCD 57-17) (Kluyveromyces polysporus)).